The chain runs to 485 residues: Glutamyl-tRNA(Gln) amidotransferase subunit A (485 aa).

Residues lysine 76 and serine 151 each act as charge relay system in the active site. Serine 175 acts as the Acyl-ester intermediate in catalysis.

This sequence belongs to the amidase family. GatA subfamily. Heterotrimer of A, B and C subunits.

The catalysed reaction is L-glutamyl-tRNA(Gln) + L-glutamine + ATP + H2O = L-glutaminyl-tRNA(Gln) + L-glutamate + ADP + phosphate + H(+). Functionally, allows the formation of correctly charged Gln-tRNA(Gln) through the transamidation of misacylated Glu-tRNA(Gln) in organisms which lack glutaminyl-tRNA synthetase. The reaction takes place in the presence of glutamine and ATP through an activated gamma-phospho-Glu-tRNA(Gln). The chain is Glutamyl-tRNA(Gln) amidotransferase subunit A from Pelagibacter ubique (strain HTCC1062).